The primary structure comprises 193 residues: Der GTPase-activating protein YihI (193 aa).

Basic residues predominate over residues 1 to 12 (MSAKQPNRKPTG). 2 disordered regions span residues 1 to 91 (MSAK…KLVM) and 143 to 193 (IIDN…PKKK). The span at 13–26 (KRKESDASALDGRE) shows a compositional bias: basic and acidic residues. Over residues 27–36 (RKRAAKRKGL) the composition is skewed to basic residues. A compositionally biased stretch (polar residues) spans 40–54 (SRQQAEQSSKNNNGK). The segment covering 145–160 (DNDDDEEDDGSFDDAS) has biased composition (acidic residues). Residues 184–193 (PEPKPEPKKK) show a composition bias toward basic and acidic residues.

The protein belongs to the YihI family. In terms of assembly, interacts with Der.

Functionally, a GTPase-activating protein (GAP) that modifies Der/EngA GTPase function. May play a role in ribosome biogenesis. The polypeptide is Der GTPase-activating protein YihI (Aeromonas salmonicida (strain A449)).